The following is a 124-amino-acid chain: Probable S-adenosyl-L-methionine-binding protein VNG_1115H (124 aa).

In terms of domain architecture, TsaA-like spans 3–124 (ATPIGYADTR…PVLDLKPALD (122 aa)). Residues 20 to 22 (PRQ), 58 to 59 (DD), Arg78, and 111 to 114 (AHGS) each bind S-adenosyl-L-methionine.

The protein belongs to the tRNA methyltransferase O family.

This is Probable S-adenosyl-L-methionine-binding protein VNG_1115H from Halobacterium salinarum (strain ATCC 700922 / JCM 11081 / NRC-1) (Halobacterium halobium).